We begin with the raw amino-acid sequence, 200 residues long: Putative HTH-type transcriptional regulator YhjB (200 aa).

In terms of domain architecture, HTH luxR-type spans aspartate 135–serine 200. The H-T-H motif DNA-binding region spans asparagine 159–glutamate 178.

This chain is Putative HTH-type transcriptional regulator YhjB (yhjB), found in Escherichia coli (strain K12).